The sequence spans 217 residues: ATP phosphoribosyltransferase (217 aa).

This sequence belongs to the ATP phosphoribosyltransferase family. Short subfamily. In terms of assembly, heteromultimer composed of HisG and HisZ subunits.

Its subcellular location is the cytoplasm. It catalyses the reaction 1-(5-phospho-beta-D-ribosyl)-ATP + diphosphate = 5-phospho-alpha-D-ribose 1-diphosphate + ATP. It functions in the pathway amino-acid biosynthesis; L-histidine biosynthesis; L-histidine from 5-phospho-alpha-D-ribose 1-diphosphate: step 1/9. Functionally, catalyzes the condensation of ATP and 5-phosphoribose 1-diphosphate to form N'-(5'-phosphoribosyl)-ATP (PR-ATP). Has a crucial role in the pathway because the rate of histidine biosynthesis seems to be controlled primarily by regulation of HisG enzymatic activity. This is ATP phosphoribosyltransferase from Burkholderia ambifaria (strain MC40-6).